The sequence spans 593 residues: Early nodule-specific protein 2 (593 aa).

Pro residues predominate over residues 71–110 (EKPPIYEPPPTEEPPPVYKPPIIHPPPNYKPPAHTPPIYH). The interval 71–593 (EKPPIYEPPP…GHYPPYKKNQ (523 aa)) is disordered. Basic and acidic residues-rich tracts occupy residues 123–138 (PYEK…EYQP) and 166–195 (PPYE…EKPP). Residues 196–210 (PEYTPPYEKPPPEYQ) show a composition bias toward pro residues. 2 stretches are compositionally biased toward basic and acidic residues: residues 227–265 (PPHE…EKPP) and 275–292 (PPHE…EKPP). Residues 294-306 (VHPPPEYQPPYLK) show a composition bias toward pro residues. 4 stretches are compositionally biased toward basic and acidic residues: residues 339–350 (PPHEKPPHEHPP), 360–372 (PPPE…ENPP), 382–394 (PPHE…EHPP), and 404–421 (PPPE…EHPP). Pro residues predominate over residues 422–435 (PEYQPPQENPPPEY). Residues 506 to 522 (PRHEKPMPKYQPPHEKL) are compositionally biased toward basic and acidic residues. The span at 532–558 (KTPPPQAYHPPPPIYHHPPFHPPPHVK) shows a compositional bias: pro residues.

It belongs to the nodulin 75 family.

Its function is as follows. Involved in early stages of root nodule development. This Medicago truncatula (Barrel medic) protein is Early nodule-specific protein 2.